A 432-amino-acid polypeptide reads, in one-letter code: Glutamyl-tRNA reductase (432 aa).

Substrate-binding positions include T49–R52, S107, E112–Q114, and Q118. Catalysis depends on C50, which acts as the Nucleophile. Residue G186–G191 participates in NADP(+) binding.

It belongs to the glutamyl-tRNA reductase family. As to quaternary structure, homodimer.

It catalyses the reaction (S)-4-amino-5-oxopentanoate + tRNA(Glu) + NADP(+) = L-glutamyl-tRNA(Glu) + NADPH + H(+). The protein operates within porphyrin-containing compound metabolism; protoporphyrin-IX biosynthesis; 5-aminolevulinate from L-glutamyl-tRNA(Glu): step 1/2. Functionally, catalyzes the NADPH-dependent reduction of glutamyl-tRNA(Glu) to glutamate 1-semialdehyde (GSA). In Campylobacter jejuni subsp. jejuni serotype O:2 (strain ATCC 700819 / NCTC 11168), this protein is Glutamyl-tRNA reductase.